The primary structure comprises 169 residues: Peptide deformylase (169 aa).

Positions 91 and 133 each coordinate Fe cation. Glutamate 134 is an active-site residue. Fe cation is bound at residue histidine 137.

Belongs to the polypeptide deformylase family. It depends on Fe(2+) as a cofactor.

The catalysed reaction is N-terminal N-formyl-L-methionyl-[peptide] + H2O = N-terminal L-methionyl-[peptide] + formate. Removes the formyl group from the N-terminal Met of newly synthesized proteins. Requires at least a dipeptide for an efficient rate of reaction. N-terminal L-methionine is a prerequisite for activity but the enzyme has broad specificity at other positions. In Aliivibrio salmonicida (strain LFI1238) (Vibrio salmonicida (strain LFI1238)), this protein is Peptide deformylase.